A 360-amino-acid chain; its full sequence is MKPSMLSKLDQLAERIVEINALLAREDATANLDQYRKLTREHAELEPVVAQFAAWKQAEEDIATAQELAADPDMKAFAEDELRAARERMESLEGELQRLLLPKDPNDHRNIFVEIRAGTGGDESALFAGDLLRMYTRYAERQRWQVEIVSESPSDLGGYKEVIARLVGEGAYSRLKFESGGHRVQRVPATEAQGRIHTSACTVAVMPEADALADIQINPADLRIDTFRASGAGGQHINKTDSAVRITHLPTGLVVECQDDRSQHRNKDRAMQVLAARLKDRQEREAQAKEASARKSLIGSGDRSDRIRTYNFPQGRVTDHRINLTLYKIDAIMDGDIDELVGALAAEHQAEQLAALGEDA.

Position 235 is an N5-methylglutamine (Gln-235). Basic and acidic residues predominate over residues 283-293 (EREAQAKEASA). The tract at residues 283–305 (EREAQAKEASARKSLIGSGDRSD) is disordered.

The protein belongs to the prokaryotic/mitochondrial release factor family. Post-translationally, methylated by PrmC. Methylation increases the termination efficiency of RF1.

It is found in the cytoplasm. In terms of biological role, peptide chain release factor 1 directs the termination of translation in response to the peptide chain termination codons UAG and UAA. The chain is Peptide chain release factor 1 from Ralstonia pickettii (strain 12J).